A 193-amino-acid polypeptide reads, in one-letter code: ATP-dependent Clp protease proteolytic subunit (193 aa).

S98 serves as the catalytic Nucleophile. Residue H123 is part of the active site.

It belongs to the peptidase S14 family. As to quaternary structure, fourteen ClpP subunits assemble into 2 heptameric rings which stack back to back to give a disk-like structure with a central cavity, resembling the structure of eukaryotic proteasomes.

It localises to the cytoplasm. The enzyme catalyses Hydrolysis of proteins to small peptides in the presence of ATP and magnesium. alpha-casein is the usual test substrate. In the absence of ATP, only oligopeptides shorter than five residues are hydrolyzed (such as succinyl-Leu-Tyr-|-NHMec, and Leu-Tyr-Leu-|-Tyr-Trp, in which cleavage of the -Tyr-|-Leu- and -Tyr-|-Trp bonds also occurs).. Functionally, cleaves peptides in various proteins in a process that requires ATP hydrolysis. Has a chymotrypsin-like activity. Plays a major role in the degradation of misfolded proteins. This Clostridium acetobutylicum (strain ATCC 824 / DSM 792 / JCM 1419 / IAM 19013 / LMG 5710 / NBRC 13948 / NRRL B-527 / VKM B-1787 / 2291 / W) protein is ATP-dependent Clp protease proteolytic subunit.